The following is a 122-amino-acid chain: Large ribosomal subunit protein uL14 (122 aa).

The protein belongs to the universal ribosomal protein uL14 family. Part of the 50S ribosomal subunit. Forms a cluster with proteins L3 and L19. In the 70S ribosome, L14 and L19 interact and together make contacts with the 16S rRNA in bridges B5 and B8.

Its function is as follows. Binds to 23S rRNA. Forms part of two intersubunit bridges in the 70S ribosome. This chain is Large ribosomal subunit protein uL14, found in Francisella philomiragia subsp. philomiragia (strain ATCC 25017 / CCUG 19701 / FSC 153 / O#319-036).